A 304-amino-acid polypeptide reads, in one-letter code: dTDP-4-dehydrorhamnose reductase (304 aa).

NADH contacts are provided by residues 15-17 (GQL), 41-42 (DI), and 63-65 (AYT). Residues 16-17 (QL), 41-42 (DI), and 63-65 (AYT) each bind NADPH. A dTDP-beta-L-rhamnose-binding site is contributed by 104 to 105 (TD). Positions 132 and 136 each coordinate NADH. 2 residues coordinate NADPH: tyrosine 132 and lysine 136. The active-site Proton donor/acceptor is tyrosine 132. Tryptophan 157 is a binding site for dTDP-beta-L-rhamnose.

Belongs to the dTDP-4-dehydrorhamnose reductase family. Requires Mg(2+) as cofactor.

The catalysed reaction is dTDP-beta-L-rhamnose + NADP(+) = dTDP-4-dehydro-beta-L-rhamnose + NADPH + H(+). Its pathway is carbohydrate biosynthesis; dTDP-L-rhamnose biosynthesis. Functionally, involved in the biosynthesis of the dTDP-L-rhamnose which is a component of the critical linker, D-N-acetylglucosamine-L-rhamnose disaccharide, which connects the galactan region of arabinogalactan to peptidoglycan via a phosphodiester linkage. Catalyzes the reduction of dTDP-6-deoxy-L-lyxo-4-hexulose to yield dTDP-L-rhamnose. This chain is dTDP-4-dehydrorhamnose reductase, found in Mycobacterium tuberculosis (strain CDC 1551 / Oshkosh).